The sequence spans 251 residues: MSDYVYDLMKKHHSVRQFKDKALSDETVQKLVEAGQSASTSSYLQTYSIIGVDDPEIKKQLKEVSGQPYVVDNGYLFVFVLDYYRHNLINENVDFDMQTSFESAEGLLVGAIDVALVSENVALAAEDMGYGIVYLGSLRNDVARVKEILDLPEYAFPLFGMAVGEPADDENGAPKPRLPFEHVFHKNVYNSNAKEQREAIQKYDEEISEYYKERTNGKRQETWSQQVAGFLSGKTRLDMLEELNKSGLMKK.

It belongs to the flavin oxidoreductase frp family. Requires FMN as cofactor.

Its function is as follows. Reduces FMN, organic nitro compounds and disulfide DTNB. Involved in maintenance of the cellular redox state and the disulfide stress response. This chain is NADPH-dependent oxidoreductase (nfrA), found in Staphylococcus haemolyticus (strain JCSC1435).